Consider the following 368-residue polypeptide: Chaperone protein DnaJ (368 aa).

In terms of domain architecture, J spans 5-70; it reads DYYQVLGVPR…KKRKLYDTHG (66 aa). A CR-type zinc finger spans residues 124 to 201; sequence GVERQIQIPT…CNGAGRVEDH (78 aa). Positions 137, 140, 153, 156, 175, 178, 189, and 192 each coordinate Zn(2+). CXXCXGXG motif repeat units follow at residues 137–144, 153–160, 175–182, and 189–196; these read CTHCHGSG, CGTCRGSG, CPHCGGRG, and CKVCNGAG.

The protein belongs to the DnaJ family. In terms of assembly, homodimer. Zn(2+) serves as cofactor.

It is found in the cytoplasm. Participates actively in the response to hyperosmotic and heat shock by preventing the aggregation of stress-denatured proteins and by disaggregating proteins, also in an autonomous, DnaK-independent fashion. Unfolded proteins bind initially to DnaJ; upon interaction with the DnaJ-bound protein, DnaK hydrolyzes its bound ATP, resulting in the formation of a stable complex. GrpE releases ADP from DnaK; ATP binding to DnaK triggers the release of the substrate protein, thus completing the reaction cycle. Several rounds of ATP-dependent interactions between DnaJ, DnaK and GrpE are required for fully efficient folding. Also involved, together with DnaK and GrpE, in the DNA replication of plasmids through activation of initiation proteins. The sequence is that of Chaperone protein DnaJ from Xylella fastidiosa (strain M23).